The primary structure comprises 1257 residues: Liprin-alpha-2 (1257 aa).

A disordered region spans residues 1-29; the sequence is MMCEVMPTINEDTPMSQRGSQSSGSDSDS. The segment covering 16 to 26 has biased composition (low complexity); the sequence is SQRGSQSSGSD. Coiled-coil stretches lie at residues 29–154 and 185–235; these read SHFE…SLRM and KALD…SSEG. Phosphoserine is present on Ser-236. Thr-237 bears the Phosphothreonine mark. Ser-239 carries the phosphoserine modification. Coiled coils occupy residues 264 to 541 and 643 to 695; these read TDDT…SLIE and HSDA…GLNL. A disordered region spans residues 439-463; sequence GQLEEKNQELQRARQREKMNEEHNK. Phosphoserine occurs at positions 687 and 689. Over residues 709–725 the composition is skewed to low complexity; sequence TASSLASSSPPSGHSTP. Disordered regions lie at residues 709–738 and 759–834; these read TASS…EMDR and EEDG…KSSI. The segment covering 787-802 has biased composition (polar residues); that stretch reads TLPSSYHNDARSSLSA. Residues Ser-817 and Ser-820 each carry the phosphoserine modification. SAM domains lie at 898–964, 1020–1084, and 1108–1177; these read WDGP…MVSL, NHEW…LKRL, and WSND…LLAL. Residues 1081–1107 are a coiled coil; that stretch reads LKRLNYDRKELERRREASQHEIKDVLV.

This sequence belongs to the liprin family. Liprin-alpha subfamily. Forms homodimers and heterodimers with liprins-alpha and liprins-beta. Interacts with the second PTPase domain of PTPRD, PTPRF and PTPRS. Interacts with KIF1A; the interaction decreases in presence of calcium.

The protein localises to the cytoplasm. Its subcellular location is the cell surface. It is found in the cell projection. The protein resides in the dendritic spine. Its function is as follows. Alters PTPRF cellular localization and induces PTPRF clustering. May regulate the disassembly of focal adhesions. May localize receptor-like tyrosine phosphatases type 2A at specific sites on the plasma membrane, possibly regulating their interaction with the extracellular environment and their association with substrates. In neuronal cells, is a scaffolding protein in the dendritic spines which acts as immobile postsynaptic post able to recruit KIF1A-driven dense core vesicles to dendritic spines. The polypeptide is Liprin-alpha-2 (Ppfia2) (Mus musculus (Mouse)).